Reading from the N-terminus, the 1119-residue chain is Protein translocase subunit SecA (1119 aa).

ATP is bound by residues Gln175, 213 to 217 (GEGKT), and Asp714. 4 residues coordinate Zn(2+): Cys1106, Cys1108, Cys1117, and Cys1118.

The protein belongs to the SecA family. Monomer and homodimer. Part of the essential Sec protein translocation apparatus which comprises SecA, SecYEG and auxiliary proteins SecDF. Other proteins may also be involved. Zn(2+) serves as cofactor.

It localises to the cell inner membrane. It is found in the cytoplasm. The enzyme catalyses ATP + H2O + cellular proteinSide 1 = ADP + phosphate + cellular proteinSide 2.. In terms of biological role, part of the Sec protein translocase complex. Interacts with the SecYEG preprotein conducting channel. Has a central role in coupling the hydrolysis of ATP to the transfer of proteins into and across the cell membrane, serving as an ATP-driven molecular motor driving the stepwise translocation of polypeptide chains across the membrane. This Azobacteroides pseudotrichonymphae genomovar. CFP2 protein is Protein translocase subunit SecA.